We begin with the raw amino-acid sequence, 162 residues long: Phosphopantetheine adenylyltransferase (162 aa).

Residue Thr10 coordinates substrate. ATP-binding positions include Thr10 to Phe11 and His18. Residues Lys42, Leu74, and Arg88 each contribute to the substrate site. Residues Gly89 to Arg91, Glu99, and Phe124 to Thr130 contribute to the ATP site.

The protein belongs to the bacterial CoaD family. Homohexamer. The cofactor is Mg(2+).

It is found in the cytoplasm. It catalyses the reaction (R)-4'-phosphopantetheine + ATP + H(+) = 3'-dephospho-CoA + diphosphate. It functions in the pathway cofactor biosynthesis; coenzyme A biosynthesis; CoA from (R)-pantothenate: step 4/5. Reversibly transfers an adenylyl group from ATP to 4'-phosphopantetheine, yielding dephospho-CoA (dPCoA) and pyrophosphate. The polypeptide is Phosphopantetheine adenylyltransferase (Francisella philomiragia subsp. philomiragia (strain ATCC 25017 / CCUG 19701 / FSC 153 / O#319-036)).